A 160-amino-acid polypeptide reads, in one-letter code: MESISSMIYLVAMMSLIIGGSQAIPYRPSAYLYNQQYCMDTLTGRQLYIGEVFTREDQCVRIQCLETLQLWEDSCQVPKLTQGNCTPVPSTNPHAEYPRCCPLYECKSYESNSGGTLEQTNIYDHYGTLRSSHLTEMIVIDGRTPPRGEIHTASARKYQV.

An N-terminal signal peptide occupies residues 1–23 (MESISSMIYLVAMMSLIIGGSQA).

Expressed in fat body.

It localises to the secreted. Functionally, probably involved in the antiviral immune response. May have a role in controlling viral load in the adult fat body, after infection with viruses such as the Drosophila C virus. The sequence is that of Protein Vago from Drosophila melanogaster (Fruit fly).